Here is a 297-residue protein sequence, read N- to C-terminus: Phosphoribosylaminoimidazole-succinocarboxamide synthase (297 aa).

It belongs to the SAICAR synthetase family.

It catalyses the reaction 5-amino-1-(5-phospho-D-ribosyl)imidazole-4-carboxylate + L-aspartate + ATP = (2S)-2-[5-amino-1-(5-phospho-beta-D-ribosyl)imidazole-4-carboxamido]succinate + ADP + phosphate + 2 H(+). Its pathway is purine metabolism; IMP biosynthesis via de novo pathway; 5-amino-1-(5-phospho-D-ribosyl)imidazole-4-carboxamide from 5-amino-1-(5-phospho-D-ribosyl)imidazole-4-carboxylate: step 1/2. The polypeptide is Phosphoribosylaminoimidazole-succinocarboxamide synthase (Mycobacterium sp. (strain KMS)).